We begin with the raw amino-acid sequence, 65 residues long: Large ribosomal subunit protein bL35 (65 aa).

The tract at residues 1–26 is disordered; the sequence is MPKIKTVRGAAKRFKKTASGGFKRKQ. The segment covering 10 to 26 has biased composition (basic residues); sequence AAKRFKKTASGGFKRKQ.

It belongs to the bacterial ribosomal protein bL35 family.

In Haemophilus ducreyi (strain 35000HP / ATCC 700724), this protein is Large ribosomal subunit protein bL35.